The primary structure comprises 115 residues: Aspartate 1-decarboxylase (115 aa).

Residue Ser25 is the Schiff-base intermediate with substrate; via pyruvic acid of the active site. Ser25 carries the post-translational modification Pyruvic acid (Ser). Position 57 (Thr57) interacts with substrate. Residue Tyr58 is the Proton donor of the active site. 72 to 74 (GAA) contacts substrate.

It belongs to the PanD family. As to quaternary structure, heterooctamer of four alpha and four beta subunits. Pyruvate is required as a cofactor. Is synthesized initially as an inactive proenzyme, which is activated by self-cleavage at a specific serine bond to produce a beta-subunit with a hydroxyl group at its C-terminus and an alpha-subunit with a pyruvoyl group at its N-terminus.

The protein resides in the cytoplasm. The catalysed reaction is L-aspartate + H(+) = beta-alanine + CO2. Its pathway is cofactor biosynthesis; (R)-pantothenate biosynthesis; beta-alanine from L-aspartate: step 1/1. Catalyzes the pyruvoyl-dependent decarboxylation of aspartate to produce beta-alanine. The protein is Aspartate 1-decarboxylase of Campylobacter fetus subsp. fetus (strain 82-40).